The primary structure comprises 119 residues: UPF0102 protein Athe_0977 (119 aa).

The protein belongs to the UPF0102 family.

In Caldicellulosiruptor bescii (strain ATCC BAA-1888 / DSM 6725 / KCTC 15123 / Z-1320) (Anaerocellum thermophilum), this protein is UPF0102 protein Athe_0977.